The primary structure comprises 352 residues: Adenosine deaminase (352 aa).

2 residues coordinate Zn(2+): histidine 24 and histidine 26. Histidine 26, aspartate 28, and glycine 181 together coordinate substrate. Zn(2+) is bound at residue histidine 208. Glutamate 211 acts as the Proton donor in catalysis. Residue aspartate 290 participates in Zn(2+) binding.

It belongs to the metallo-dependent hydrolases superfamily. Adenosine and AMP deaminases family. Adenosine deaminase subfamily. Zn(2+) serves as cofactor.

The enzyme catalyses adenosine + H2O + H(+) = inosine + NH4(+). It catalyses the reaction 2'-deoxyadenosine + H2O + H(+) = 2'-deoxyinosine + NH4(+). Functionally, catalyzes the hydrolytic deamination of adenosine and 2-deoxyadenosine. The sequence is that of Adenosine deaminase from Lactococcus lactis subsp. lactis (strain IL1403) (Streptococcus lactis).